We begin with the raw amino-acid sequence, 691 residues long: Elongation factor G (691 aa).

The tr-type G domain maps to 8 to 282 (DRVRNIGIAA…AVVDYLPAPI (275 aa)). Residues 17–24 (AHIDAGKT), 81–85 (DTPGH), and 135–138 (NKMD) each bind GTP.

The protein belongs to the TRAFAC class translation factor GTPase superfamily. Classic translation factor GTPase family. EF-G/EF-2 subfamily.

Its subcellular location is the cytoplasm. Functionally, catalyzes the GTP-dependent ribosomal translocation step during translation elongation. During this step, the ribosome changes from the pre-translocational (PRE) to the post-translocational (POST) state as the newly formed A-site-bound peptidyl-tRNA and P-site-bound deacylated tRNA move to the P and E sites, respectively. Catalyzes the coordinated movement of the two tRNA molecules, the mRNA and conformational changes in the ribosome. The sequence is that of Elongation factor G from Synechococcus sp. (strain RCC307).